Consider the following 259-residue polypeptide: Enolase-phosphatase E1 (259 aa).

2 residues coordinate Mg(2+): aspartate 16 and glutamate 18. Residues 151 to 152 (SS) and lysine 185 each bind substrate. Aspartate 210 lines the Mg(2+) pocket.

Belongs to the HAD-like hydrolase superfamily. MasA/MtnC family. As to quaternary structure, monomer. Mg(2+) is required as a cofactor.

The protein resides in the cytoplasm. It is found in the nucleus. It carries out the reaction 5-methylsulfanyl-2,3-dioxopentyl phosphate + H2O = 1,2-dihydroxy-5-(methylsulfanyl)pent-1-en-3-one + phosphate. It participates in amino-acid biosynthesis; L-methionine biosynthesis via salvage pathway; L-methionine from S-methyl-5-thio-alpha-D-ribose 1-phosphate: step 3/6. Its pathway is amino-acid biosynthesis; L-methionine biosynthesis via salvage pathway; L-methionine from S-methyl-5-thio-alpha-D-ribose 1-phosphate: step 4/6. Functionally, bifunctional enzyme that catalyzes the enolization of 2,3-diketo-5-methylthiopentyl-1-phosphate (DK-MTP-1-P) into the intermediate 2-hydroxy-3-keto-5-methylthiopentenyl-1-phosphate (HK-MTPenyl-1-P), which is then dephosphorylated to form the acireductone 1,2-dihydroxy-3-keto-5-methylthiopentene (DHK-MTPene). This is Enolase-phosphatase E1 (enoph1) from Xenopus tropicalis (Western clawed frog).